Reading from the N-terminus, the 283-residue chain is Cardiolipin synthase (CMP-forming) (283 aa).

Transmembrane regions (helical) follow at residues 83–103, 155–175, and 209–229; these read PFIGLFIITNNLTPALGLFAF, VSIAAIILGRDVLLAISALFI, and LSKWNTFFQMVYLGSGVLLLL.

Belongs to the CDP-alcohol phosphatidyltransferase class-I family. In terms of assembly, may be found in a large complex. Mg(2+) is required as a cofactor.

The protein localises to the mitochondrion inner membrane. The catalysed reaction is a CDP-1,2-diacyl-sn-glycerol + a 1,2-diacyl-sn-glycero-3-phospho-(1'-sn-glycerol) = a cardiolipin + CMP + H(+). In terms of biological role, catalyzes the synthesis of cardiolipin (CL) (diphosphatidylglycerol) by specifically transferring a phosphatidyl group from CDP-diacylglycerol to phosphatidylglycerol (PG). CL is a key phospholipid in mitochondrial membranes and plays important roles in maintaining the functional integrity and dynamics of mitochondria under both optimal and stress conditions. This chain is Cardiolipin synthase (CMP-forming) (CRD1), found in Saccharomyces cerevisiae (strain ATCC 204508 / S288c) (Baker's yeast).